We begin with the raw amino-acid sequence, 449 residues long: Probable phosphoglucosamine mutase (449 aa).

Residue Ser-96 is the Phosphoserine intermediate of the active site. Ser-96, Asp-233, Asp-235, and Asp-237 together coordinate Mg(2+). Ser-96 is subject to Phosphoserine.

The protein belongs to the phosphohexose mutase family. The cofactor is Mg(2+). In terms of processing, activated by phosphorylation.

It catalyses the reaction alpha-D-glucosamine 1-phosphate = D-glucosamine 6-phosphate. Its function is as follows. Catalyzes the conversion of glucosamine-6-phosphate to glucosamine-1-phosphate. Does not display phosphoglucomutase (PGM) or phosphomannomutase (PMM) activities. This chain is Probable phosphoglucosamine mutase (glmM), found in Thermococcus kodakarensis (strain ATCC BAA-918 / JCM 12380 / KOD1) (Pyrococcus kodakaraensis (strain KOD1)).